The sequence spans 179 residues: Exosome complex component Csl4 (179 aa).

Positions 58–137 constitute an S1 motif domain; the sequence is GDVVLGRVVD…RLSTKEEEMG (80 aa). Zn(2+) is bound by residues Cys-143, Cys-146, Cys-159, and Cys-162.

It belongs to the CSL4 family. As to quaternary structure, component of the archaeal exosome complex. Forms a trimer of Rrp4 and/or Csl4 subunits. The trimer associates with a hexameric ring-like arrangement composed of 3 Rrp41-Rrp42 heterodimers. Interacts with DnaG.

It is found in the cytoplasm. Its function is as follows. Non-catalytic component of the exosome, which is a complex involved in RNA degradation. Increases the RNA binding and the efficiency of RNA degradation. Helpful for the interaction of the exosome with A-poor RNAs. This chain is Exosome complex component Csl4, found in Archaeoglobus fulgidus (strain ATCC 49558 / DSM 4304 / JCM 9628 / NBRC 100126 / VC-16).